We begin with the raw amino-acid sequence, 212 residues long: MNIFRLTGDLSHLAAIVILLLKIWKTRSCAGISGKSQLLFALVFTTRYLDLFTSFISLYNTSMKLIYIACSYATVYLIYMKFKATYDGNHDTFRVEFLVVPVGGLSFLVNHDFSPLEILWTFSIYLESVAILPQLFMISKTGEAETITTHYLFFLGLYRALYLVNWIWRFYFEGFFDLIAVVAGVVQTILYCDFFYLYITKVLKGKKLSLPA.

Residues Met-1–Phe-4 lie on the Lumenal side of the membrane. The chain crosses the membrane as a helical span at residues Arg-5–Trp-24. Residues Lys-25–Ile-32 are Cytoplasmic-facing. The chain crosses the membrane as a helical span at residues Ser-33–Phe-52. Residues Arg-47–Tyr-48 form an interaction with the K-D-E-L motif on target proteins region. The Lumenal portion of the chain corresponds to Thr-53–Leu-58. Residues Tyr-59 to Tyr-79 traverse the membrane as a helical segment. Over Met-80–Thr-92 the chain is Cytoplasmic. The chain crosses the membrane as a helical span at residues Phe-93–Asn-110. Residues His-111 to Leu-116 lie on the Lumenal side of the membrane. A helical membrane pass occupies residues Glu-117 to Leu-135. Over Phe-136–Thr-149 the chain is Cytoplasmic. The helical transmembrane segment at His-150–Trp-168 threads the bilayer. Positions Arg-159–Arg-169 are interaction with the K-D-E-L motif on target proteins. The Lumenal segment spans residues Arg-169 to Leu-178. The chain crosses the membrane as a helical span at residues Ile-179–Ile-199. Residues Thr-200–Ala-212 lie on the Cytoplasmic side of the membrane. Residues Lys-204–Lys-207 form an important for recycling of cargo proteins with the sequence motif K-D-E-L from the Golgi to the endoplasmic reticulum region.

This sequence belongs to the ERD2 family.

Its subcellular location is the endoplasmic reticulum membrane. The protein resides in the golgi apparatus membrane. The protein localises to the cytoplasmic vesicle. It is found in the COPI-coated vesicle membrane. Functionally, membrane receptor that binds the K-D-E-L sequence motif in the C-terminal part of endoplasmic reticulum resident proteins and maintains their localization in that compartment by participating to their vesicle-mediated recycling back from the Golgi. Binding is pH dependent, and is optimal at pH 5-5.4. This is ER lumen protein-retaining receptor 2 (Kdelr2) from Mus musculus (Mouse).